A 121-amino-acid polypeptide reads, in one-letter code: Large ribosomal subunit protein bL20c (121 aa).

This sequence belongs to the bacterial ribosomal protein bL20 family.

The protein resides in the plastid. Its subcellular location is the chloroplast. Binds directly to 23S ribosomal RNA and is necessary for the in vitro assembly process of the 50S ribosomal subunit. It is not involved in the protein synthesizing functions of that subunit. This chain is Large ribosomal subunit protein bL20c, found in Lotus japonicus (Lotus corniculatus var. japonicus).